Reading from the N-terminus, the 512-residue chain is Glutathione-binding protein GsiB (512 aa).

The first 26 residues, 1-26, serve as a signal peptide directing secretion; that stretch reads MARAVHRSGLVALGIVTALMASCAFA.

Belongs to the bacterial solute-binding protein 5 family. The complex is composed of two ATP-binding proteins (GsiA), two transmembrane proteins (GsiC and GsiD) and a solute-binding protein (GsiB).

Its subcellular location is the periplasm. In terms of biological role, part of the ABC transporter complex GsiABCD involved in glutathione import. Binds glutathione. The sequence is that of Glutathione-binding protein GsiB from Shigella dysenteriae serotype 1 (strain Sd197).